A 950-amino-acid polypeptide reads, in one-letter code: Bifunctional glutamine synthetase adenylyltransferase/adenylyl-removing enzyme (950 aa).

An adenylyl removase region spans residues 1-440 (MLPLPSELQI…VFDHLIGDDA (440 aa)). An adenylyl transferase region spans residues 449–950 (HGLYKSLWQD…KWLVAAPSDV (502 aa)).

It belongs to the GlnE family. It depends on Mg(2+) as a cofactor.

It catalyses the reaction [glutamine synthetase]-O(4)-(5'-adenylyl)-L-tyrosine + phosphate = [glutamine synthetase]-L-tyrosine + ADP. The catalysed reaction is [glutamine synthetase]-L-tyrosine + ATP = [glutamine synthetase]-O(4)-(5'-adenylyl)-L-tyrosine + diphosphate. In terms of biological role, involved in the regulation of glutamine synthetase GlnA, a key enzyme in the process to assimilate ammonia. When cellular nitrogen levels are high, the C-terminal adenylyl transferase (AT) inactivates GlnA by covalent transfer of an adenylyl group from ATP to specific tyrosine residue of GlnA, thus reducing its activity. Conversely, when nitrogen levels are low, the N-terminal adenylyl removase (AR) activates GlnA by removing the adenylyl group by phosphorolysis, increasing its activity. The regulatory region of GlnE binds the signal transduction protein PII (GlnB) which indicates the nitrogen status of the cell. The polypeptide is Bifunctional glutamine synthetase adenylyltransferase/adenylyl-removing enzyme (Yersinia enterocolitica serotype O:8 / biotype 1B (strain NCTC 13174 / 8081)).